The primary structure comprises 815 residues: Probable beta-glucosidase G (815 aa).

A signal peptide spans 1 to 20 (MASIAHLVVSGLLAATAVNG). 4 N-linked (GlcNAc...) asparagine glycosylation sites follow: Asn-40, Asn-58, Asn-229, and Asn-276. Residue Asp-304 is part of the active site. N-linked (GlcNAc...) asparagine glycosylation is found at Asn-343, Asn-350, Asn-402, Asn-507, Asn-563, Asn-584, Asn-623, Asn-662, and Asn-715.

Belongs to the glycosyl hydrolase 3 family.

It is found in the secreted. It carries out the reaction Hydrolysis of terminal, non-reducing beta-D-glucosyl residues with release of beta-D-glucose.. It participates in glycan metabolism; cellulose degradation. In terms of biological role, beta-glucosidases are one of a number of cellulolytic enzymes involved in the degradation of cellulosic biomass. Catalyzes the last step releasing glucose from the inhibitory cellobiose. The protein is Probable beta-glucosidase G (bglG) of Aspergillus flavus (strain ATCC 200026 / FGSC A1120 / IAM 13836 / NRRL 3357 / JCM 12722 / SRRC 167).